Reading from the N-terminus, the 887-residue chain is Translation initiation factor IF-2 (887 aa).

The interval 1-259 (MSDEQDQGET…KVGDDRRRGA (259 aa)) is disordered. Residues 62-94 (GRPSAPSRASGGAAAPRGLTAAEQAARQRAVVE) are compositionally biased toward low complexity. Composition is skewed to basic and acidic residues over residues 95–111 (QQRE…EQEK) and 119–158 (EEAR…RRAA). Residues 159-210 (EASQATAAPPAPAAAASPRAAMPAPTAAPARPGAAPARRTAPVPPATSASET) show a composition bias toward low complexity. The segment covering 250-259 (KVGDDRRRGA) has biased composition (basic and acidic residues). Residues 386–556 (VRPPVVTIMG…LLQAELLDLK (171 aa)) form the tr-type G domain. Residues 395 to 402 (GHVDHGKT) form a G1 region. 395–402 (GHVDHGKT) lines the GTP pocket. The G2 stretch occupies residues 420–424 (GITQH). Positions 442–445 (DTPG) are G3. GTP is bound by residues 442 to 446 (DTPGH) and 496 to 499 (NKID). Residues 496–499 (NKID) are G4. The segment at 532–534 (SAL) is G5.

This sequence belongs to the TRAFAC class translation factor GTPase superfamily. Classic translation factor GTPase family. IF-2 subfamily.

The protein resides in the cytoplasm. Functionally, one of the essential components for the initiation of protein synthesis. Protects formylmethionyl-tRNA from spontaneous hydrolysis and promotes its binding to the 30S ribosomal subunits. Also involved in the hydrolysis of GTP during the formation of the 70S ribosomal complex. The chain is Translation initiation factor IF-2 from Acidiphilium cryptum (strain JF-5).